Consider the following 58-residue polypeptide: UPF0391 membrane protein Bxeno_A2959 (58 aa).

Transmembrane regions (helical) follow at residues 4–24 (WALFFAVVAVIAGVLGFTGVA) and 33–53 (FLFIVFVILCVVFLVLGFVVT).

This sequence belongs to the UPF0391 family.

It localises to the cell membrane. The protein is UPF0391 membrane protein Bxeno_A2959 of Paraburkholderia xenovorans (strain LB400).